Reading from the N-terminus, the 484-residue chain is tRNA sulfurtransferase (484 aa).

Residues 63–167 enclose the THUMP domain; the sequence is EAFGERLACI…NEQLYLVDKR (105 aa). Residues 185–186, K267, G289, and Q298 contribute to the ATP site; that span reads LI. A disulfide bridge connects residues C346 and C458. The 79-residue stretch at 406–484 folds into the Rhodanese domain; the sequence is ISADEVIIDV…GYSNVKVYRP (79 aa). Residue C458 is the Cysteine persulfide intermediate of the active site.

The protein belongs to the ThiI family.

It is found in the cytoplasm. The catalysed reaction is [ThiI sulfur-carrier protein]-S-sulfanyl-L-cysteine + a uridine in tRNA + 2 reduced [2Fe-2S]-[ferredoxin] + ATP + H(+) = [ThiI sulfur-carrier protein]-L-cysteine + a 4-thiouridine in tRNA + 2 oxidized [2Fe-2S]-[ferredoxin] + AMP + diphosphate. It carries out the reaction [ThiS sulfur-carrier protein]-C-terminal Gly-Gly-AMP + S-sulfanyl-L-cysteinyl-[cysteine desulfurase] + AH2 = [ThiS sulfur-carrier protein]-C-terminal-Gly-aminoethanethioate + L-cysteinyl-[cysteine desulfurase] + A + AMP + 2 H(+). It functions in the pathway cofactor biosynthesis; thiamine diphosphate biosynthesis. Catalyzes the ATP-dependent transfer of a sulfur to tRNA to produce 4-thiouridine in position 8 of tRNAs, which functions as a near-UV photosensor. Also catalyzes the transfer of sulfur to the sulfur carrier protein ThiS, forming ThiS-thiocarboxylate. This is a step in the synthesis of thiazole, in the thiamine biosynthesis pathway. The sulfur is donated as persulfide by IscS. This Shewanella piezotolerans (strain WP3 / JCM 13877) protein is tRNA sulfurtransferase.